A 162-amino-acid chain; its full sequence is UPF0305 protein MmarC5_0909 (162 aa).

Belongs to the UPF0305 family.

The polypeptide is UPF0305 protein MmarC5_0909 (Methanococcus maripaludis (strain C5 / ATCC BAA-1333)).